Reading from the N-terminus, the 673-residue chain is Beta-galactosidase GalA (673 aa).

Arg-105 provides a ligand contact to substrate. Residue Cys-109 coordinates Zn(2+). Substrate is bound at residue Asn-143. The active-site Proton donor is Glu-144. Zn(2+)-binding residues include Cys-149, Cys-151, and Cys-154. Glu-308 acts as the Nucleophile in catalysis. Substrate-binding positions include Trp-316 and 356-359 (EKFH).

Belongs to the glycosyl hydrolase 42 family. Homodimer.

It carries out the reaction Hydrolysis of terminal non-reducing beta-D-galactose residues in beta-D-galactosides.. Inhibited by hydrolysis end products D-galactose and D-glucose. The hydrolysis of o-nitrophenyl-beta-D-galactopyranoside (ONPG) is slightly activated by monovalent ions, Na(+) and K(+). Concentrations of these ions in the range of 1-100 mM exert the stimulating effects. The presence of 1 mM Mn(2+) together with the presence of 10 mM Na(+) slightly stimulates the activity, while presence of 10 mM Mn(2+) inhibits the activity by about 40%. In terms of biological role, catalyzes the hydrolysis of lactose to its constituent monosaccharides glucose and galactose. Possesses a low level of transgalactosylation activity for the production of galacto-oligosaccharides (GOS) from lactose. This is Beta-galactosidase GalA from Bacillus licheniformis (strain ATCC 14580 / DSM 13 / JCM 2505 / CCUG 7422 / NBRC 12200 / NCIMB 9375 / NCTC 10341 / NRRL NRS-1264 / Gibson 46).